A 2388-amino-acid polypeptide reads, in one-letter code: MSNYLNANSTENNNNNNNNNNNNNNNINNNFNTTDFKIVGNFNTPPIGSNNNNNNNNNSISTQSLQTINECNSGGEQSPKIKTNNNSYNTPVSSSTSTTGTNTTPMKSTPIHNSLQNIFKNANRSNLNNNNNNNNNNNNNNNNNNNNNNNNNSGCGSGSLNSVNNNNNNNNNNNNNSNNNNSNSNSNSNNNNNSNSNNNNNNSNSNAYPLKYYQHPQQSCSNLDSFENLSPLRQSSTLLNFSSNNNNNNNNNNNNNNNNSNNNSSNNNNKNNSSKNKVGGGNNKNNGGDDSAQFISSDNKYNTVGNETHHHHHHQLHNHRHSNVQGSSSPIKSSPKLISSQSLGNIFSQISPNIALTTNISPHGSPFSSSSSSRKSSSSPSFLNQNNQNNPNNQNNQNNSTSPHEKSFLNNSNDSFDYNDNSKRLRNRLTRNTGYSSTGSIGNSSSSSFYNNNNENSNIYSKIKHTRSSSGGNKPSPKYFQTSQAIYTPPYPQPYPQPPQLPPPSSSSSLSKENDNVDNNNTNNNNNNNNNNNNNNNNNNNESFFSSKGTMNLIHISLLSVLAFYIFLMVSKKFLFRVFQWNNNINSLFILIFSFHFIFSSILMFLLVVLLKMKKYSHSISQSARESLRNSRVIPSLLNFFLSDYIFLGLVLSGLVNILQVNLFFNPKDPLLNLDSISNISTAIEFLVVGIVLNFSHIPKKMYNSRYSEFRVSSSISPYFQDESYNVNNIINNDNKNKINDKSDNSNSITNNNNINNNIDNNNNSSSNTKINNDLNFDNNIKNNDINNNITNNNNNNNNNNNNNNNTNNNNNNNNNNSNNNNNNNNNNSNKNNNTNSNNNNNNSSNNNNTNNNKINDNKNNNNNNNNNNNNNNNNNNNNNNEEDDEEEKNDWSYSFQIFFTRIFLCLSITYTLIVLRLNYDPLNQFLQQSSSFGSGANGNSGGGNVNTIISPVQFQAPLATLLHFIQLVLLLVNYNRFRTNRFFSLILSTIFIEVSSWETFGLNSRLFESYIFEALLIRRWIRACSVGFPIVGIILDIYSGWMSINQSIKSIDQQNIMIVNRFNYLCSNVKKQEELTQYNSQFYIESMNQFKRLVQNTGSIISLIYDTDVQPNQEAYLSKFSSSYEQLSKLTKECLFYSEIKQLKRNDVENLSFVVSNLLEDLISTPSIRTQFEEKEIDLFYLIDKDVPLSLVGDSQKIKQILLKLITNSIKATYEGEVYIRVSLSSNLGVLKQQPIHHHRHHHRHHHHHHHHHHHHIIDDDDYDDDNDDDNNTEDSSSCCNIDELSDKIKDNQDENLELKKSNNDKIIENKENQENNNNNNNNNNNNNNNNNNNNNNSNNNTNININTNNNNDSNNNNCINNDLKNNNNNSNNNVNNNNNNINDSNNNNNSNNNNINNNINNNINNNNNIKKKKKKNEFTVYFSVIDSGSGIDPYSTNLLFQPFSLSSYNVNSTNTDGEFGLGLAICKQLSNLMNGEIKYETEMEKGSVFELQVPMKCDSISSITSSMNSTTNTTNHYPRIMNNQSSKFFANSKWGEGLKILVIDDNPNIGKVIAMHLEPFGFKVFQRTTFQSAIYFFNERNGDFNLILLDPLIPSLVIDEIKQMKQDSSNIIKNPPLVIMCTAKLRKSLNVDNVHYLYKPIKREQLTVLSQLLPNTSTINPIYSNQNLNNSGSSNGGGGGGGGGGGGGGGGGSGSSNIDFNKTKLGGSNISTGIGNSGLINSNNIPTPVNTPSNIIPNLLSCQSLLTSLNNANIPQLTNDIGITNNNINNNSLMFTTPNSTLSNNGITGLDNNSNNDTGSIDNNSNISTNIDNNNDYFIRNNGIPPQNDMNTYNNYVLNHQQGVLPKSLSVPSTPLSYNMLPTNLNINAKRSSLQPLNENSVLPTNLTPPILSASPQSLLPMGNDINSILPNTQQSQIDLQSQIELQPLLQSTIIRNDRGGDILPDSTLEGQITNLSGNNSTISINPPLPETNNNTTTTTTTTQPKKSPILTSSNGSDKSEGSTGSNRSKSRISFLNSSNSGLLKNNLGEDIYCKGDQSEGIPIPKSERTSDSSSSSSSSDSHGQDDHSYRLEDFSISSPSSQSPLLDLSGTSGTSGTTNLANSGINSGSGSGGGDIINQNQLITSNQLFQQQLQQQQQPQQQQPPGTPTISPSSSFPLLPIPRDIINSSGASSGIKVKSSTSIPDYVQVSPRRFSGSSTGSGSSVASPQLLSTSNQLNNNINNLNLNSNNNNNNNNNNNNNNNTNNDNNNNNDNNYNVNILLVEDNLVNAKIAMTVLRKHNFRVELSKNGQLAMERIKQSHSSFDLILMDIHMPVMDGITCSKLTRKFETEHGLKHLPIIALTADATTGHKNLCLEAGCNEFMSKPLDYALLISLLKKLVFNKDQ.

Disordered stretches follow at residues 1–32 (MSNY…NNFN), 42–61 (FNTP…NSIS), 69–111 (NECN…STPI), 123–209 (NRSN…NAYP), 237–337 (TLLN…SPKL), 361–421 (SPHG…YNDN), 430–449 (TRNT…SSSF), and 486–542 (IYTP…NNNE). Residues 69-82 (NECNSGGEQSPKIK) are compositionally biased toward polar residues. Low complexity-rich tracts occupy residues 83–110 (TNNN…KSTP), 125–206 (SNLN…SNSN), and 242–288 (SSNN…NNGG). A compositionally biased stretch (polar residues) spans 293–306 (QFISSDNKYNTVGN). Residues 309–322 (HHHHHHQLHNHRHS) show a composition bias toward basic residues. 4 stretches are compositionally biased toward low complexity: residues 325-337 (QGSS…SPKL), 361-399 (SPHG…NQNN), 410-419 (NNSNDSFDYN), and 432-449 (NTGY…SSSF). Positions 489 to 505 (PPYPQPYPQPPQLPPPS) are enriched in pro residues. Residues 506-541 (SSSSLSKENDNVDNNNTNNNNNNNNNNNNNNNNNNN) show a composition bias toward low complexity. 4 consecutive transmembrane segments (helical) span residues 550-570 (TMNL…FLMV), 589-609 (FILI…LLVV), 645-665 (YIFL…NLFF), and 679-699 (NIST…SHIP). Residues 732–888 (NNDNKNKIND…NNNEEDDEEE (157 aa)) are disordered. The span at 735–744 (NKNKINDKSD) shows a compositional bias: basic and acidic residues. Positions 745 to 880 (NSNSITNNNN…NNNNNNNNNN (136 aa)) are enriched in low complexity. The next 3 membrane-spanning stretches (helical) occupy residues 896–916 (FQIF…LIVL), 953–973 (VQFQ…LLLV), and 1025–1045 (CSVG…WMSI). The region spanning 1093–1499 (RLVQNTGSII…VFELQVPMKC (407 aa)) is the Histidine kinase domain. The segment covering 1236–1257 (PIHHHRHHHRHHHHHHHHHHHH) has biased composition (basic residues). Positions 1236–1410 (PIHHHRHHHR…INNNINNNNN (175 aa)) are disordered. Residues 1260–1274 (DDDDYDDDNDDDNNT) are compositionally biased toward acidic residues. The segment covering 1286-1315 (LSDKIKDNQDENLELKKSNNDKIIENKENQ) has biased composition (basic and acidic residues). The segment covering 1316–1410 (ENNNNNNNNN…INNNINNNNN (95 aa)) has biased composition (low complexity). The Response regulatory 1 domain occupies 1541 to 1656 (KILVIDDNPN…QLTVLSQLLP (116 aa)). The residue at position 1592 (aspartate 1592) is a 4-aspartylphosphate. Disordered regions lie at residues 1666 to 1702 (SNQN…NIDF), 1960 to 2022 (GNNS…NSSN), 2036 to 2121 (CKGD…DIIN), 2133 to 2183 (QQQL…VKSS), and 2218 to 2256 (NQLN…NNND). Residues 1676–1696 (SNGGGGGGGGGGGGGGGGGSG) are compositionally biased toward gly residues. The segment covering 1974-1985 (TNNNTTTTTTTT) has biased composition (low complexity). Residues 1986–2010 (QPKKSPILTSSNGSDKSEGSTGSNR) are compositionally biased toward polar residues. Over residues 2054-2064 (DSSSSSSSSDS) the composition is skewed to low complexity. A compositionally biased stretch (basic and acidic residues) spans 2065–2076 (HGQDDHSYRLED). 2 stretches are compositionally biased toward low complexity: residues 2078–2109 (SISS…SGIN) and 2133–2165 (QQQL…LPIP). Over residues 2169–2183 (INSSGASSGIKVKSS) the composition is skewed to polar residues. The region spanning 2262 to 2383 (NILLVEDNLV…LLISLLKKLV (122 aa)) is the Response regulatory 2 domain. A 4-aspartylphosphate modification is found at aspartate 2313.

In terms of processing, activation probably requires transfer of a phosphate group between a histidine in the kinase core (transmitter) domain and an aspartate of the receiver domain.

It is found in the membrane. It carries out the reaction ATP + protein L-histidine = ADP + protein N-phospho-L-histidine.. Its function is as follows. Acts as a receptor histidine kinase for a signal transduction pathway. This protein undergoes an ATP-dependent autophosphorylation at a conserved histidine residue in the kinase core, and a phosphoryl group is then transferred to a conserved aspartate residue in the receiver domain. In Dictyostelium discoideum (Social amoeba), this protein is Hybrid signal transduction histidine kinase M (dhkM).